A 206-amino-acid polypeptide reads, in one-letter code: MGQVASMPHRCGTYVLELHEWYRKFVEECPSGLITLHEFRQFFSDVTVGENSSEYAEQIFRALDNNGDGIVDFREYVTAISMLAHGTPEDKLKWSFKLYDKDGDGAITRSEMLEIMRAVYKMSVVASLTKVNPMTAEECTNRIFVRLDKDQNAIISLQEFVDGSLGDEWVRQMLECDLSTVEIQKMTKHSHLPARSSRERLFHANT.

The N-myristoyl glycine moiety is linked to residue Gly2. 4 consecutive EF-hand domains span residues 31–49 (SGLI…VTVG), 51–86 (NSSE…LAHG), 87–122 (TPED…VYKM), and 135–170 (TAEE…DEWV). Asp64, Asn66, Asp68, Glu75, Asp100, Asp102, Asp104, and Glu111 together coordinate Ca(2+).

Retina; inner segments, somata and synaptic terminals of cone receptors.

Functionally, does not stimulate guanylyl cyclase (GC) when free calcium ion concentration is low, but inhibits GC when free calcium ions concentration is elevated. This chain is Guanylyl cyclase inhibitory protein (GCIP), found in Lithobates pipiens (Northern leopard frog).